A 234-amino-acid chain; its full sequence is Rhodanese-like domain-containing protein 9, chloroplastic (234 aa).

The transit peptide at 1–47 directs the protein to the chloroplast; the sequence is MAGIISPSPTALYFTSNVGGRRLKAVSWAGKSVSGNVIRRRSLRIAA. The Rhodanese domain maps to 62-185; it reads AEEGYSVVDV…VKPGTFESVG (124 aa). The active-site Cysteine persulfide intermediate is the Cys-145. A helical transmembrane segment spans residues 204–222; it reads ISAVLGTVLVCAYLFIQFF.

It is found in the plastid. The protein resides in the chloroplast. The protein localises to the membrane. This chain is Rhodanese-like domain-containing protein 9, chloroplastic (STR9), found in Arabidopsis thaliana (Mouse-ear cress).